Here is a 380-residue protein sequence, read N- to C-terminus: Tetratricopeptide repeat protein 19, mitochondrial (380 aa).

A mitochondrion-targeting transit peptide spans 1–70 (MFRLLSWSLG…AALAWFSRPA (70 aa)). TPR repeat units lie at residues 136–169 (TYTY…LLGG), 179–212 (IEIS…LEEK), 237–270 (GMCL…SEEI), 279–312 (IVLM…ARQI), and 318–351 (HMVL…AKLK).

This sequence belongs to the TTC19 family. Binds to the mature mitochondrial complex III dimer, after the incorporation of the Rieske protein UQCRFS1. Interacts with UQCRC1 and UQCRFS1. Interacts with ZFYVE26 and CHMP4B. Post-translationally, proteolytically cleaved by PARL.

It is found in the mitochondrion inner membrane. Functionally, required for the preservation of the structural and functional integrity of mitochondrial respiratory complex III by allowing the physiological turnover of the Rieske protein UQCRFS1. Involved in the clearance of UQCRFS1 N-terminal fragments, which are produced upon incorporation of UQCRFS1 into the complex III and whose presence is detrimental for its catalytic activity. The sequence is that of Tetratricopeptide repeat protein 19, mitochondrial (TTC19) from Homo sapiens (Human).